The sequence spans 216 residues: Peptide methionine sulfoxide reductase MsrA (216 aa).

Residue C54 is part of the active site.

The protein belongs to the MsrA Met sulfoxide reductase family.

The enzyme catalyses L-methionyl-[protein] + [thioredoxin]-disulfide + H2O = L-methionyl-(S)-S-oxide-[protein] + [thioredoxin]-dithiol. It catalyses the reaction [thioredoxin]-disulfide + L-methionine + H2O = L-methionine (S)-S-oxide + [thioredoxin]-dithiol. In terms of biological role, has an important function as a repair enzyme for proteins that have been inactivated by oxidation. Catalyzes the reversible oxidation-reduction of methionine sulfoxide in proteins to methionine. The polypeptide is Peptide methionine sulfoxide reductase MsrA (Xylella fastidiosa (strain Temecula1 / ATCC 700964)).